A 419-amino-acid polypeptide reads, in one-letter code: UDP-N-acetylmuramoylalanine--D-glutamate ligase (419 aa).

109 to 115 contacts ATP; that stretch reads GSAGKTT.

This sequence belongs to the MurCDEF family.

Its subcellular location is the cytoplasm. It carries out the reaction UDP-N-acetyl-alpha-D-muramoyl-L-alanine + D-glutamate + ATP = UDP-N-acetyl-alpha-D-muramoyl-L-alanyl-D-glutamate + ADP + phosphate + H(+). It participates in cell wall biogenesis; peptidoglycan biosynthesis. In terms of biological role, cell wall formation. Catalyzes the addition of glutamate to the nucleotide precursor UDP-N-acetylmuramoyl-L-alanine (UMA). The polypeptide is UDP-N-acetylmuramoylalanine--D-glutamate ligase (Chlamydia caviae (strain ATCC VR-813 / DSM 19441 / 03DC25 / GPIC) (Chlamydophila caviae)).